Reading from the N-terminus, the 371-residue chain is Aminomethyltransferase (371 aa).

It belongs to the GcvT family. As to quaternary structure, the glycine cleavage system is composed of four proteins: P, T, L and H.

The catalysed reaction is N(6)-[(R)-S(8)-aminomethyldihydrolipoyl]-L-lysyl-[protein] + (6S)-5,6,7,8-tetrahydrofolate = N(6)-[(R)-dihydrolipoyl]-L-lysyl-[protein] + (6R)-5,10-methylene-5,6,7,8-tetrahydrofolate + NH4(+). In terms of biological role, the glycine cleavage system catalyzes the degradation of glycine. This chain is Aminomethyltransferase, found in Oceanobacillus iheyensis (strain DSM 14371 / CIP 107618 / JCM 11309 / KCTC 3954 / HTE831).